A 404-amino-acid chain; its full sequence is Cysteine desulfurase IscS (404 aa).

Residues 75 to 76, Asn155, Gln183, and 203 to 205 contribute to the pyridoxal 5'-phosphate site; these read AT and SAH. An N6-(pyridoxal phosphate)lysine modification is found at Lys206. Thr243 serves as a coordination point for pyridoxal 5'-phosphate. Residue Cys328 is the Cysteine persulfide intermediate of the active site. Cys328 contacts [2Fe-2S] cluster.

This sequence belongs to the class-V pyridoxal-phosphate-dependent aminotransferase family. NifS/IscS subfamily. Homodimer. Forms a heterotetramer with IscU, interacts with other sulfur acceptors. Requires pyridoxal 5'-phosphate as cofactor.

It localises to the cytoplasm. The catalysed reaction is (sulfur carrier)-H + L-cysteine = (sulfur carrier)-SH + L-alanine. It functions in the pathway cofactor biosynthesis; iron-sulfur cluster biosynthesis. Functionally, master enzyme that delivers sulfur to a number of partners involved in Fe-S cluster assembly, tRNA modification or cofactor biosynthesis. Catalyzes the removal of elemental sulfur atoms from cysteine to produce alanine. Functions as a sulfur delivery protein for Fe-S cluster synthesis onto IscU, an Fe-S scaffold assembly protein, as well as other S acceptor proteins. This Shewanella loihica (strain ATCC BAA-1088 / PV-4) protein is Cysteine desulfurase IscS.